We begin with the raw amino-acid sequence, 332 residues long: Probable thc operon regulatory protein (332 aa).

One can recognise an HTH araC/xylS-type domain in the interval 227–328 (RLAVDYLEAH…GVSPSEDLRT (102 aa)). 2 consecutive DNA-binding regions (H-T-H motif) follow at residues 244 to 265 (AQVA…QNSL) and 295 to 318 (VTEI…KQTF).

Probably involved in the positive regulation of the thc operon for the degradation of the thiocarbamate herbicide EPTC. The protein is Probable thc operon regulatory protein (thcR) of Rhodococcus erythropolis (Arthrobacter picolinophilus).